Here is a 152-residue protein sequence, read N- to C-terminus: MANSERTFIAIKPDGVQRGLVGEIIKRFEQKGFRLVGLKFLQASEDLLKEHYTDLKDRPFFTGLVKYMHSGPVVAMVWEGLNVVKTGRVMLGETNPADSKPGTIRGDFCIQVGRNIIHGSDSVKSAEKEISLWFQPEELVEYKSCAQNWIYE.

Residues Lys-12, Phe-60, Arg-88, and Thr-94 each coordinate ATP. Lys-100 is covalently cross-linked (Glycyl lysine isopeptide (Lys-Gly) (interchain with G-Cter in ubiquitin)). ATP contacts are provided by Arg-105 and Asn-115. His-118 functions as the Pros-phosphohistidine intermediate in the catalytic mechanism. Ser-120 and Ser-122 each carry phosphoserine. Position 124 is an N6-acetyllysine (Lys-124). A Phosphoserine modification is found at Ser-125.

Belongs to the NDK family. As to quaternary structure, hexamer of two different chains: An and B (A6, A5B, A4B2, A3B3, A2B4, AB5, B6). Interacts with PRUNE1. Component of the SET complex, composed of at least ANP32A, APEX1, HMGB2, NME1, SET and TREX1. Within this complex, interacts directly with SET. Also interacts with TREX1, but only following translocation to the nucleus. The cofactor is Mg(2+).

The protein resides in the cytoplasm. The protein localises to the nucleus. It catalyses the reaction a 2'-deoxyribonucleoside 5'-diphosphate + ATP = a 2'-deoxyribonucleoside 5'-triphosphate + ADP. The catalysed reaction is a ribonucleoside 5'-diphosphate + ATP = a ribonucleoside 5'-triphosphate + ADP. Autophosphorylation at His-118 increases serine/threonine protein kinase activity of the enzyme. Interaction with the SET complex inhibits exonuclease activity. In terms of biological role, major role in the synthesis of nucleoside triphosphates other than ATP. The ATP gamma phosphate is transferred to the NDP beta phosphate via a ping-pong mechanism, using a phosphorylated active-site intermediate. Possesses nucleoside-diphosphate kinase, serine/threonine-specific protein kinase, geranyl and farnesyl pyrophosphate kinase, histidine protein kinase and 3'-5' exonuclease activities. Involved in cell proliferation, differentiation and development, signal transduction, G protein-coupled receptor endocytosis, and gene expression. Required for neural development including neural patterning and cell fate determination. During GZMA-mediated cell death, works in concert with TREX1. NME1 nicks one strand of DNA and TREX1 removes bases from the free 3' end to enhance DNA damage and prevent DNA end reannealing and rapid repair. This is Nucleoside diphosphate kinase A (Nme1) from Mus musculus (Mouse).